A 489-amino-acid chain; its full sequence is 5-hydroxytryptamine receptor 3A (489 aa).

The first 23 residues, 1–23 (MRLCIPQVLLALFLSMLTAPGEG), serve as a signal peptide directing secretion. Topologically, residues 24 to 246 (SRRRATQARD…MKFYVIIRRR (223 aa)) are extracellular. N-linked (GlcNAc...) asparagine glycosylation is found at asparagine 109, asparagine 175, and asparagine 191. Cysteine 162 and cysteine 176 form a disulfide bridge. The helical transmembrane segment at 247–273 (PLFYAVSLLLPSIFLMVVDIVGFCLPP) threads the bilayer. Topologically, residues 274-278 (DSGER) are cytoplasmic. A helical transmembrane segment spans residues 279 to 297 (VSFKITLLLGYSVFLIIVS). Topologically, residues 298–307 (DTLPATAIGT) are extracellular. A helical transmembrane segment spans residues 308–326 (PLIGVYFVVCMALLVISLA). The Cytoplasmic segment spans residues 327–466 (ETIFIVRLVH…GYVLDRLLFR (140 aa)). The HA-stretch; determines single-channel conductance in 5-HT3 receptors stretch occupies residues 425 to 461 (AVRGLLQELSSIRHFLEKRDEMREVARDWLRVGYVLD). A helical transmembrane segment spans residues 467–486 (IYLLAVLAYSITLVTLWSIW). Residues 487–489 (HYS) are Extracellular-facing.

The protein belongs to the ligand-gated ion channel (TC 1.A.9) family. 5-hydroxytryptamine receptor (TC 1.A.9.2) subfamily. HTR3A sub-subfamily. In terms of assembly, forms homopentameric as well as heteropentameric serotonin-activated cation-selective channel complexes with HTR3B or HTR3C or HTR3D or HTR3E. The homomeric complex is functional but exhibits low conductance with modified voltage dependence, and decreased agonist and antagonist affinity. Heteropentameric complexes display properties which resemble that of neuronal serotonin-activated channels in vivo. Interacts with RIC3. In terms of tissue distribution, brain, spinal cord, and heart.

It localises to the postsynaptic cell membrane. Its subcellular location is the cell membrane. It carries out the reaction Na(+)(in) = Na(+)(out). The catalysed reaction is K(+)(in) = K(+)(out). The enzyme catalyses Ca(2+)(in) = Ca(2+)(out). It catalyses the reaction Mg(2+)(in) = Mg(2+)(out). Functionally, forms serotonin (5-hydroxytryptamine/5-HT3)-activated cation-selective channel complexes, which when activated cause fast, depolarizing responses in neurons. The chain is 5-hydroxytryptamine receptor 3A from Mus musculus (Mouse).